The following is a 403-amino-acid chain: Large ribosomal subunit protein uL3 (403 aa).

The disordered stretch occupies residues 1–37; sequence MSHRKFSAPRHGSLGFLPRKRSSRHRGKVKSFPKDDP. Ser-13 bears the Phosphoserine mark. Residues 18-31 are compositionally biased toward basic residues; that stretch reads PRKRSSRHRGKVKS. Residue Lys-39 forms a Glycyl lysine isopeptide (Lys-Gly) (interchain with G-Cter in SUMO2) linkage. Residue Lys-136 is modified to N6-acetyllysine. Residues Lys-224 and Lys-226 each participate in a glycyl lysine isopeptide (Lys-Gly) (interchain with G-Cter in SUMO2) cross-link. Residue His-245 is modified to Tele-methylhistidine. 2 positions are modified to N6-acetyllysine; alternate: Lys-286 and Lys-294. A Glycyl lysine isopeptide (Lys-Gly) (interchain with G-Cter in SUMO2); alternate cross-link involves residue Lys-286. Lys-294 is covalently cross-linked (Glycyl lysine isopeptide (Lys-Gly) (interchain with G-Cter in SUMO1); alternate). At Ser-304 the chain carries Phosphoserine. Lys-366 bears the N6-acetyllysine; alternate mark. Lys-366 participates in a covalent cross-link: Glycyl lysine isopeptide (Lys-Gly) (interchain with G-Cter in SUMO2); alternate. Lys-373 bears the N6-acetyllysine mark. Residues Lys-386, Lys-393, and Lys-399 each participate in a glycyl lysine isopeptide (Lys-Gly) (interchain with G-Cter in SUMO2) cross-link.

This sequence belongs to the universal ribosomal protein uL3 family. Component of the large ribosomal subunit. Interacts with DHX33. Post-translationally, constitutively monomethylated at His-245 by METTL18. Methylation at His-245 regulates translation elongation by slowing ribosome traversal on tyrosine codons: slower elongation provides enough time for proper folding of synthesized proteins and prevents cellular aggregation of tyrosine-rich proteins It is not required for incorporation of RPL3 into ribosomes.

Its subcellular location is the nucleus. The protein resides in the nucleolus. It is found in the cytoplasm. Its function is as follows. Component of the large ribosomal subunit. The ribosome is a large ribonucleoprotein complex responsible for the synthesis of proteins in the cell. The sequence is that of Large ribosomal subunit protein uL3 (RPL3) from Macaca fascicularis (Crab-eating macaque).